Here is a 372-residue protein sequence, read N- to C-terminus: Putative glutamate--cysteine ligase 2 (372 aa).

Belongs to the glutamate--cysteine ligase type 2 family. YbdK subfamily. As to quaternary structure, homodimer.

It carries out the reaction L-cysteine + L-glutamate + ATP = gamma-L-glutamyl-L-cysteine + ADP + phosphate + H(+). ATP-dependent carboxylate-amine ligase which exhibits weak glutamate--cysteine ligase activity. This is Putative glutamate--cysteine ligase 2 (ybdK) from Escherichia coli O6:H1 (strain CFT073 / ATCC 700928 / UPEC).